A 115-amino-acid chain; its full sequence is Phosphoribosyl-ATP pyrophosphatase (115 aa).

It belongs to the PRA-PH family.

It localises to the cytoplasm. It carries out the reaction 1-(5-phospho-beta-D-ribosyl)-ATP + H2O = 1-(5-phospho-beta-D-ribosyl)-5'-AMP + diphosphate + H(+). It participates in amino-acid biosynthesis; L-histidine biosynthesis; L-histidine from 5-phospho-alpha-D-ribose 1-diphosphate: step 2/9. The sequence is that of Phosphoribosyl-ATP pyrophosphatase from Bordetella bronchiseptica (strain ATCC BAA-588 / NCTC 13252 / RB50) (Alcaligenes bronchisepticus).